The primary structure comprises 313 residues: B3 domain-containing protein At2g31720 (313 aa).

A disordered region spans residues 80-110 (KNQDPEQNPNRVASSPSSCHLESKRPQKVVS). The segment covering 84 to 99 (PEQNPNRVASSPSSCH) has biased composition (polar residues). A DNA-binding region (TF-B3) is located at residues 169 to 267 (WKQILDMDFL…MLFFAFVLSD (99 aa)).

It localises to the nucleus. The polypeptide is B3 domain-containing protein At2g31720 (ARF70) (Arabidopsis thaliana (Mouse-ear cress)).